Reading from the N-terminus, the 153-residue chain is Peptidoglycan-associated lipoprotein (153 aa).

An N-terminal signal peptide occupies residues 1 to 19; it reads MNKFVKSLLVAGSVAALAA. Cys20 carries N-palmitoyl cysteine lipidation. Cys20 is lipidated: S-diacylglycerol cysteine. One can recognise an OmpA-like domain in the interval 40–153; that stretch reads SVADLQQRYN…SKNRRAVLAY (114 aa). Peptidoglycan binding regions lie at residues 55-56 and 97-101; these read FD and YNIAL.

This sequence belongs to the Pal lipoprotein family. In terms of assembly, the Tol-Pal system is composed of five core proteins: the inner membrane proteins TolA, TolQ and TolR, the periplasmic protein TolB and the outer membrane protein Pal. They form a network linking the inner and outer membranes and the peptidoglycan layer.

It is found in the cell outer membrane. Its function is as follows. Part of the Tol-Pal system, which plays a role in outer membrane invagination during cell division and is important for maintaining outer membrane integrity. This Haemophilus influenzae (strain ATCC 51907 / DSM 11121 / KW20 / Rd) protein is Peptidoglycan-associated lipoprotein.